A 172-amino-acid polypeptide reads, in one-letter code: Cytochrome c oxidase subunit 4 isoform 2, mitochondrial (172 aa).

A mitochondrion-targeting transit peptide spans 1 to 34; sequence MFSRAARSLVMRTGLRTRGTGTHSPGDAAGSQRR. A compositionally biased stretch (low complexity) spans 13 to 22; that stretch reads TGLRTRGTGT. A disordered region spans residues 13–32; the sequence is TGLRTRGTGTHSPGDAAGSQ. Residues 35-101 lie on the Mitochondrial matrix side of the membrane; it reads MTPYVDCYAQ…TFAEMNHRSN (67 aa). Residues 102–127 form a helical membrane-spanning segment; it reads EWKTVMGCVFFFIGFTALVIWWQRVY. Over 128–172 the chain is Mitochondrial intermembrane; sequence VFPKKVVTLTEERKAQQLQRLLDMKSNPIQGLAAHWDYEKKEWKK.

The protein belongs to the cytochrome c oxidase IV family. Component of the cytochrome c oxidase (complex IV, CIV), a multisubunit enzyme composed of 14 subunits. The complex is composed of a catalytic core of 3 subunits MT-CO1, MT-CO2 and MT-CO3, encoded in the mitochondrial DNA, and 11 supernumerary subunits COX4I, COX5A, COX5B, COX6A, COX6B, COX6C, COX7A, COX7B, COX7C, COX8 and NDUFA4, which are encoded in the nuclear genome. The complex exists as a monomer or a dimer and forms supercomplexes (SCs) in the inner mitochondrial membrane with NADH-ubiquinone oxidoreductase (complex I, CI) and ubiquinol-cytochrome c oxidoreductase (cytochrome b-c1 complex, complex III, CIII), resulting in different assemblies (supercomplex SCI(1)III(2)IV(1) and megacomplex MCI(2)III(2)IV(2)).

It is found in the mitochondrion inner membrane. It functions in the pathway energy metabolism; oxidative phosphorylation. In terms of biological role, component of the cytochrome c oxidase, the last enzyme in the mitochondrial electron transport chain which drives oxidative phosphorylation. The respiratory chain contains 3 multisubunit complexes succinate dehydrogenase (complex II, CII), ubiquinol-cytochrome c oxidoreductase (cytochrome b-c1 complex, complex III, CIII) and cytochrome c oxidase (complex IV, CIV), that cooperate to transfer electrons derived from NADH and succinate to molecular oxygen, creating an electrochemical gradient over the inner membrane that drives transmembrane transport and the ATP synthase. Cytochrome c oxidase is the component of the respiratory chain that catalyzes the reduction of oxygen to water. Electrons originating from reduced cytochrome c in the intermembrane space (IMS) are transferred via the dinuclear copper A center (CU(A)) of subunit 2 and heme A of subunit 1 to the active site in subunit 1, a binuclear center (BNC) formed by heme A3 and copper B (CU(B)). The BNC reduces molecular oxygen to 2 water molecules using 4 electrons from cytochrome c in the IMS and 4 protons from the mitochondrial matrix. The chain is Cytochrome c oxidase subunit 4 isoform 2, mitochondrial (Cox4i2) from Mus musculus (Mouse).